Consider the following 226-residue polypeptide: HTH-type transcriptional regulator Rv0324 (226 aa).

One can recognise an HTH arsR-type domain in the interval 7 to 101 (RKAALLDQVA…LVQVVADEHL (95 aa)). The segment at residues 41–64 (VEAIATATGMNLTTASANLQALKS) is a DNA-binding region (H-T-H motif). Residues 129 to 218 (EAGEVTLVDV…WRLAGLPVDE (90 aa)) enclose the Rhodanese domain. C177 acts as the Cysteine persulfide intermediate in catalysis.

In terms of biological role, part of a regulatory network that coordinates tolerance to the antitubercular drug bedaquiline. This Mycobacterium tuberculosis (strain ATCC 25618 / H37Rv) protein is HTH-type transcriptional regulator Rv0324.